The sequence spans 170 residues: Probable inactive uracil-DNA glycosylase, mitochondrial (170 aa).

The transit peptide at Met1–Val53 directs the protein to the mitochondrion.

It belongs to the uracil-DNA glycosylase (UDG) superfamily. UNG family.

It localises to the mitochondrion. Its function is as follows. Probable inactive paralog of AtUNG (AC Q9LIH6) generated by a gene duplication event and subsequently disrupted by at least two transposon insertions. The chain is Probable inactive uracil-DNA glycosylase, mitochondrial from Arabidopsis thaliana (Mouse-ear cress).